Here is a 194-residue protein sequence, read N- to C-terminus: Imidazoleglycerol-phosphate dehydratase (194 aa).

Belongs to the imidazoleglycerol-phosphate dehydratase family.

It localises to the cytoplasm. It carries out the reaction D-erythro-1-(imidazol-4-yl)glycerol 3-phosphate = 3-(imidazol-4-yl)-2-oxopropyl phosphate + H2O. It participates in amino-acid biosynthesis; L-histidine biosynthesis; L-histidine from 5-phospho-alpha-D-ribose 1-diphosphate: step 6/9. The protein is Imidazoleglycerol-phosphate dehydratase of Caldanaerobacter subterraneus subsp. tengcongensis (strain DSM 15242 / JCM 11007 / NBRC 100824 / MB4) (Thermoanaerobacter tengcongensis).